The following is a 656-amino-acid chain: MPSRKSKAAALDTPQSESSTFSSTLDSSAPSPARNLRRSGRNILQPSSEKDRDHEKRSGEELAGRMMGKDANGHCLREGKEQEEGVKMAIEGLARMERRLQRATKRQKKQLEEDGIPVPSVVSRFPTAPYHHKSTNAEEREAKEPVLKTHSKDVEREAEIGVDDVVKMEPAATNIIEPEDAQDAAERGAARPPAVNSSYLPLPWKGRLGYACLNTYLRNAKPPIFSSRTCRMASIVDHRHPLQFEDEPEHHLKNKPDKSKEPQDELGHKFVQELGLANARDIVKMLCWNEKYGIRFLRLSSEMFPFASHPVHGYKLAPFASEVLAEAGRVAAELGHRLTTHPGQFTQLGSPRKEVVESAIRDLEYHDELLSLLKLPEQQNRDAVMIIHMGGQFGDKAATLERFKRNYARLSQSCKNRLVLENDDVGWTVHDLLPVCEELNIPMVLDYHHHNICFDPAHLREGTLDISDPKLQERIANTWKRKGIKQKMHYSEPCDGAVTPRDRRKHRPRVMTLPPCPPDMDLMIEAKDKEQAVFELMRTFKLPGFEKINDMVPYDRDDENRPAPPVKAPKKKKGGKRKRTTDEEAAEPEEVDTAADDVKDAPEGPKEVPEEERAMGGPYNRVYWPLGCEEWLKPKKREVKKGKVPEEVEDEGEFDG.

Disordered regions lie at residues 1–82 (MPSR…GKEQ), 119–146 (PSVV…KEPV), 175–194 (IIEP…RPPA), 241–264 (PLQF…EPQD), 492–515 (EPCD…TLPP), 550–620 (DMVP…GPYN), and 636–656 (KREV…EFDG). Low complexity predominate over residues 13–32 (TPQSESSTFSSTLDSSAPSP). 2 stretches are compositionally biased toward basic and acidic residues: residues 48–82 (SEKD…GKEQ) and 135–146 (TNAEEREAKEPV). A compositionally biased stretch (basic and acidic residues) spans 550–561 (DMVPYDRDDENR). The segment covering 568–579 (APKKKKGGKRKR) has biased composition (basic residues). The segment covering 583 to 595 (EEAAEPEEVDTAA) has biased composition (acidic residues). A compositionally biased stretch (basic and acidic residues) spans 596-614 (DDVKDAPEGPKEVPEEERA). A compositionally biased stretch (acidic residues) spans 647–656 (EVEDEGEFDG).

The protein belongs to the uve1/UvsE family. It depends on Mg(2+) as a cofactor.

Endonuclease for the repair of UV-irradiated DNA. Involved in the excision of cyclobutane pyrimidine dimers (CPD) and 6-4 pyrimidine pyrimidones (6-4PP) which forms the UV damage repair (UVDR) pathway. This Neurospora crassa (strain ATCC 24698 / 74-OR23-1A / CBS 708.71 / DSM 1257 / FGSC 987) protein is UV-damage endonuclease (mus-18).